The chain runs to 413 residues: Multifunctional CCA protein (413 aa).

ATP-binding residues include G8 and R11. Residues G8 and R11 each contribute to the CTP site. Mg(2+) contacts are provided by D21 and D23. Residues R91, R143, and R146 each coordinate ATP. Residues R91, R143, and R146 each contribute to the CTP site. The region spanning 232–333 is the HD domain; it reads TGVHVMMVVD…VRLFERSDAL (102 aa).

Belongs to the tRNA nucleotidyltransferase/poly(A) polymerase family. Bacterial CCA-adding enzyme type 1 subfamily. Monomer. Can also form homodimers and oligomers. It depends on Mg(2+) as a cofactor. Ni(2+) serves as cofactor.

It carries out the reaction a tRNA precursor + 2 CTP + ATP = a tRNA with a 3' CCA end + 3 diphosphate. The catalysed reaction is a tRNA with a 3' CCA end + 2 CTP + ATP = a tRNA with a 3' CCACCA end + 3 diphosphate. In terms of biological role, catalyzes the addition and repair of the essential 3'-terminal CCA sequence in tRNAs without using a nucleic acid template. Adds these three nucleotides in the order of C, C, and A to the tRNA nucleotide-73, using CTP and ATP as substrates and producing inorganic pyrophosphate. tRNA 3'-terminal CCA addition is required both for tRNA processing and repair. Also involved in tRNA surveillance by mediating tandem CCA addition to generate a CCACCA at the 3' terminus of unstable tRNAs. While stable tRNAs receive only 3'-terminal CCA, unstable tRNAs are marked with CCACCA and rapidly degraded. This is Multifunctional CCA protein from Burkholderia vietnamiensis (strain G4 / LMG 22486) (Burkholderia cepacia (strain R1808)).